The primary structure comprises 98 residues: NADH-ubiquinone oxidoreductase chain 4L (98 aa).

3 helical membrane passes run 2–22 (LSISININLAFAAALLGMLMF), 29–49 (SLLCLEGMMLSMFILSTLIIL), and 61–81 (ILLLVFAACEAAIGLALLVMV).

Belongs to the complex I subunit 4L family. As to quaternary structure, core subunit of respiratory chain NADH dehydrogenase (Complex I) which is composed of 45 different subunits.

It is found in the mitochondrion inner membrane. The enzyme catalyses a ubiquinone + NADH + 5 H(+)(in) = a ubiquinol + NAD(+) + 4 H(+)(out). In terms of biological role, core subunit of the mitochondrial membrane respiratory chain NADH dehydrogenase (Complex I) which catalyzes electron transfer from NADH through the respiratory chain, using ubiquinone as an electron acceptor. Part of the enzyme membrane arm which is embedded in the lipid bilayer and involved in proton translocation. This Microcebus ravelobensis (Golden-brown mouse lemur) protein is NADH-ubiquinone oxidoreductase chain 4L (MT-ND4L).